The sequence spans 286 residues: MLGRAQRTLKRKVCYSGVGVHFGKPAMLTLEPAEENTGVVFSRHAASGQYIPARLANVCGTGRSTTLSSQGGVVSTVEHLLAALYSCGVDNVRIHCSEDEIPIGDGSSQVFVDLIDQAGVEEQGQTVPIARLTHPVYYQHQDTILAAFPSEEFKISYTLHYSHNSAIGTQYRSQVISEESFRKEIAPCRTFALYNELCFLMERGLIGGGCLGNAVLFKDDSVISLGKLRFPDEPVRHKMLDLIGDLSLIGKPFLAHIIAVGSGHSSNIALGNKILEALQYEQELVK.

Zn(2+)-binding residues include His79, His237, and Asp241. His264 serves as the catalytic Proton donor.

This sequence belongs to the LpxC family. It depends on Zn(2+) as a cofactor.

It carries out the reaction a UDP-3-O-[(3R)-3-hydroxyacyl]-N-acetyl-alpha-D-glucosamine + H2O = a UDP-3-O-[(3R)-3-hydroxyacyl]-alpha-D-glucosamine + acetate. It participates in glycolipid biosynthesis; lipid IV(A) biosynthesis; lipid IV(A) from (3R)-3-hydroxytetradecanoyl-[acyl-carrier-protein] and UDP-N-acetyl-alpha-D-glucosamine: step 2/6. Functionally, catalyzes the hydrolysis of UDP-3-O-myristoyl-N-acetylglucosamine to form UDP-3-O-myristoylglucosamine and acetate, the committed step in lipid A biosynthesis. The chain is UDP-3-O-acyl-N-acetylglucosamine deacetylase from Chlamydia muridarum (strain MoPn / Nigg).